A 267-amino-acid polypeptide reads, in one-letter code: 2-keto-3-deoxy-L-rhamnonate aldolase (267 aa).

His49 serves as the catalytic Proton acceptor. Gln151 is a binding site for substrate. Residue Glu153 participates in Mg(2+) binding. 2 residues coordinate substrate: Ala178 and Asp179. Asp179 contacts Mg(2+).

Belongs to the HpcH/HpaI aldolase family. KDR aldolase subfamily. In terms of assembly, homohexamer. The cofactor is Mg(2+). Requires Ni(2+) as cofactor.

The catalysed reaction is 2-dehydro-3-deoxy-L-rhamnonate = (S)-lactaldehyde + pyruvate. The enzyme catalyses D-glyceraldehyde + 3-hydroxypyruvate = (3R,4S,5R)-3,4,5,6-tetrahydroxy-2-oxohexanoate. It catalyses the reaction D-glyceraldehyde + 3-hydroxypyruvate = 2-dehydro-D-gluconate. It carries out the reaction D-glyceraldehyde + 3-hydroxypyruvate = 2-dehydro-D-galactonate. The catalysed reaction is D-glyceraldehyde + pyruvate = 2-dehydro-3-deoxy-L-galactonate. The enzyme catalyses 2-dehydro-3-deoxy-D-gluconate = D-glyceraldehyde + pyruvate. Catalyzes the reversible retro-aldol cleavage of 2-keto-3-deoxy-L-rhamnonate (KDR) to pyruvate and lactaldehyde. 2-keto-3-deoxy-L-mannonate, 2-keto-3-deoxy-L-lyxonate and 4-hydroxy-2-ketoheptane-1,7-dioate (HKHD) are also reasonably good substrates, although 2-keto-3-deoxy-L-rhamnonate is likely to be the physiological substrate. In vitro, can catalyze the aldolisation reaction between hydroxypyruvate (HPA) or pyruvate (PA) and D-glyceraldehyde (D-GA). The condensation of hydroxypyruvate and D-glyceraldehyde produces (3R,4S,5R)-3,4,5,6-tetrahydroxy-2-oxohexanoate as the major product, 2-dehydro-D-gluconate and 2-dehydro-D-galactonate. The condensation of pyruvate and D-glyceraldehyde produces 2-dehydro-3-deoxy-L-galactonate as the major product and 2-dehydro-3-deoxy-D-gluconate. The polypeptide is 2-keto-3-deoxy-L-rhamnonate aldolase (rhmA) (Escherichia coli (strain K12)).